A 200-amino-acid chain; its full sequence is MGNLFARKRRSRVTEQDKAVLQLKQQRDKLKQYQKKITLQLQRERELAKQLLHDGKKEKAKLLLKKKRYQEQLLEKTDNQISNLEKMVEDIEFAQIEMKVIEGLKVGNECLKKMHEVMSIEEVERIMDETQEGIEYQRQIDEMLSGSLTAEDEEAILEELEAITQEDLELPEAPSEPLPDTIPEKQAVKNKPKPQMIAAS.

Glycine 2 carries the N-myristoyl glycine lipid modification. Residues 9–102 adopt a coiled-coil conformation; it reads RRSRVTEQDK…FAQIEMKVIE (94 aa). The segment at 166-200 is disordered; that stretch reads EDLELPEAPSEPLPDTIPEKQAVKNKPKPQMIAAS. The Type-2 MIT-interacting motif motif lies at 168–179; the sequence is LELPEAPSEPLP.

The protein belongs to the SNF7 family. As to quaternary structure, probable core component of the endosomal sorting required for transport complex III (ESCRT-III). ESCRT-III components are thought to multimerize to form a flat lattice on the perimeter membrane of the endosome.

Its subcellular location is the endomembrane system. The protein resides in the late endosome membrane. Functionally, probable core component of the endosomal sorting required for transport complex III (ESCRT-III) which is involved in multivesicular bodies (MVBs) formation and sorting of endosomal cargo proteins into MVBs. MVBs contain intraluminal vesicles (ILVs) that are generated by invagination and scission from the limiting membrane of the endosome and mostly are delivered to lysosomes enabling degradation of membrane proteins, such as stimulated growth factor receptors, lysosomal enzymes and lipids. In the ESCRT-III complex, it probably serves as an acceptor for the ESCRT-II complex on endosomal membranes. The sequence is that of Charged multivesicular body protein 6-A (chmp6-a) from Xenopus laevis (African clawed frog).